The sequence spans 501 residues: Solute carrier family 2, facilitated glucose transporter member 5 (501 aa).

M1 is modified (N-acetylmethionine). The Cytoplasmic segment spans residues 1–18 (MEPQDPVKREGRLTPVIV). A helical transmembrane segment spans residues 19–39 (LATLIAAFGSSFQYGYNVAAI). A D-fructose-binding site is contributed by Y32. At 40–68 (NSPSEFMKDFYNYTYYDRVGEYMNEFYLT) the chain is on the extracellular side. An N-linked (GlcNAc...) asparagine glycan is attached at N51. The chain crosses the membrane as a helical span at residues 69 to 91 (LLWSVTVSMFPFGGFLGSLMVGP). Over 92-98 (LVNNLGR) the chain is Cytoplasmic. Residues 99–119 (KGTLLFNNIFSIVPALLMGFS) form a helical membrane-spanning segment. The Extracellular segment spans residues 120–126 (ELAKSFE). Residues 127 to 149 (MIIVARVLVGICAGLSSNVVPMY) traverse the membrane as a helical segment. The Cytoplasmic segment spans residues 150–161 (LGELAPKNWRGA). Residues 162–182 (LGVVPQLFITIGILVAQIFGL) traverse the membrane as a helical segment. Q167 contributes to the D-fructose binding site. The Extracellular portion of the chain corresponds to 183-192 (RSLLANEEGW). The helical transmembrane segment at 193–213 (PILLGLTGIPAVLQLLFLPFF) threads the bilayer. The Cytoplasmic portion of the chain corresponds to 214–277 (PESPRYLLIQ…LFKMRSLRWQ (64 aa)). A helical transmembrane segment spans residues 278–298 (VISIIVLMAGQQLSGVNAIYY). Residues Q288 and 296-298 (IYY) contribute to the D-fructose site. Over 299-313 (YADQIYLSAGVNEDD) the chain is Extracellular. The helical transmembrane segment at 314-334 (VQYVTAGTGAVNVLITVCAIF) threads the bilayer. The Cytoplasmic segment spans residues 335-342 (VVELMGRR). Residues 343-363 (FLLLLGFSVCFTACCVLTGAL) traverse the membrane as a helical segment. Over 364 to 371 (ALQDVISW) the chain is Extracellular. The chain crosses the membrane as a helical span at residues 372–394 (MPYVSIACVISYVIGHALGPSPI). H387 lines the D-fructose pocket. Residues 395–412 (PALLVTEIFLQSSRPAAY) lie on the Cytoplasmic side of the membrane. A helical transmembrane segment spans residues 413 to 433 (MVAGTVHWLSNFTVGLVFPFI). Position 419–420 (419–420 (HW)) interacts with D-fructose. The Extracellular portion of the chain corresponds to 434–439 (QVGLGA). Residues 440–460 (YSFVIFAVICLLTTVYIFLII) traverse the membrane as a helical segment. The Cytoplasmic segment spans residues 461 to 501 (PETKSKTFIEINRIFIKMNKVPGVHPEKEELKEFPPSTARQ).

Belongs to the major facilitator superfamily. Sugar transporter (TC 2.A.1.1) family. Glucose transporter subfamily.

It is found in the apical cell membrane. The protein resides in the cell membrane. The protein localises to the sarcolemma. It catalyses the reaction D-fructose(out) = D-fructose(in). Functionally, functions as a fructose transporter that has only low activity with other monosaccharides. Can mediate the uptake of deoxyglucose, but with low efficiency. Essential for fructose uptake in the small intestine. Plays a role in the regulation of salt uptake and blood pressure in response to dietary fructose. Required for the development of high blood pressure in response to high dietary fructose intake. The sequence is that of Solute carrier family 2, facilitated glucose transporter member 5 from Bos taurus (Bovine).